The primary structure comprises 89 residues: Small ribosomal subunit protein uS15 (89 aa).

A disordered region spans residues 1-24 (MALTQTKKQELISQYQAHETDTGS).

It belongs to the universal ribosomal protein uS15 family. In terms of assembly, part of the 30S ribosomal subunit. Forms a bridge to the 50S subunit in the 70S ribosome, contacting the 23S rRNA.

In terms of biological role, one of the primary rRNA binding proteins, it binds directly to 16S rRNA where it helps nucleate assembly of the platform of the 30S subunit by binding and bridging several RNA helices of the 16S rRNA. Forms an intersubunit bridge (bridge B4) with the 23S rRNA of the 50S subunit in the ribosome. The protein is Small ribosomal subunit protein uS15 of Microcystis aeruginosa (strain NIES-843 / IAM M-2473).